The sequence spans 519 residues: ATP synthase subunit beta, mitochondrial (519 aa).

Residue glycine 195–threonine 202 coordinates ATP.

This sequence belongs to the ATPase alpha/beta chains family. F-type ATPases have 2 components, CF(1) - the catalytic core - and CF(0) - the membrane proton channel. CF(1) has five subunits: alpha(3), beta(3), gamma(1), delta(1), epsilon(1). CF(0) has three main subunits: a, b and c.

The protein resides in the mitochondrion. It localises to the mitochondrion inner membrane. The enzyme catalyses ATP + H2O + 4 H(+)(in) = ADP + phosphate + 5 H(+)(out). In terms of biological role, mitochondrial membrane ATP synthase (F(1)F(0) ATP synthase or Complex V) produces ATP from ADP in the presence of a proton gradient across the membrane which is generated by electron transport complexes of the respiratory chain. F-type ATPases consist of two structural domains, F(1) - containing the extramembraneous catalytic core, and F(0) - containing the membrane proton channel, linked together by a central stalk and a peripheral stalk. During catalysis, ATP synthesis in the catalytic domain of F(1) is coupled via a rotary mechanism of the central stalk subunits to proton translocation. Subunits alpha and beta form the catalytic core in F(1). Rotation of the central stalk against the surrounding alpha(3)beta(3) subunits leads to hydrolysis of ATP in three separate catalytic sites on the beta subunits. In Neurospora crassa (strain ATCC 24698 / 74-OR23-1A / CBS 708.71 / DSM 1257 / FGSC 987), this protein is ATP synthase subunit beta, mitochondrial (atp-2).